A 156-amino-acid chain; its full sequence is Small ribosomal subunit protein uS7 (156 aa).

This sequence belongs to the universal ribosomal protein uS7 family. Part of the 30S ribosomal subunit. Contacts proteins S9 and S11.

One of the primary rRNA binding proteins, it binds directly to 16S rRNA where it nucleates assembly of the head domain of the 30S subunit. Is located at the subunit interface close to the decoding center, probably blocks exit of the E-site tRNA. The polypeptide is Small ribosomal subunit protein uS7 (Leptothrix cholodnii (strain ATCC 51168 / LMG 8142 / SP-6) (Leptothrix discophora (strain SP-6))).